The primary structure comprises 141 residues: Large ribosomal subunit protein uL11 (141 aa).

Belongs to the universal ribosomal protein uL11 family. Part of the ribosomal stalk of the 50S ribosomal subunit. Interacts with L10 and the large rRNA to form the base of the stalk. L10 forms an elongated spine to which L12 dimers bind in a sequential fashion forming a multimeric L10(L12)X complex. Post-translationally, one or more lysine residues are methylated.

Functionally, forms part of the ribosomal stalk which helps the ribosome interact with GTP-bound translation factors. This Helicobacter acinonychis (strain Sheeba) protein is Large ribosomal subunit protein uL11.